The following is a 345-amino-acid chain: tRNA-dihydrouridine(20/20a) synthase (345 aa).

Residues 32–34 (PML) and Gln84 contribute to the FMN site. The Proton donor role is filled by Cys114. FMN-binding positions include Lys153, His186, 226–228 (NGG), and 248–249 (GR).

The protein belongs to the Dus family. DusA subfamily. It depends on FMN as a cofactor.

The catalysed reaction is 5,6-dihydrouridine(20) in tRNA + NADP(+) = uridine(20) in tRNA + NADPH + H(+). The enzyme catalyses 5,6-dihydrouridine(20) in tRNA + NAD(+) = uridine(20) in tRNA + NADH + H(+). It catalyses the reaction 5,6-dihydrouridine(20a) in tRNA + NADP(+) = uridine(20a) in tRNA + NADPH + H(+). It carries out the reaction 5,6-dihydrouridine(20a) in tRNA + NAD(+) = uridine(20a) in tRNA + NADH + H(+). Its function is as follows. Catalyzes the synthesis of 5,6-dihydrouridine (D), a modified base found in the D-loop of most tRNAs, via the reduction of the C5-C6 double bond in target uridines. Specifically modifies U20 and U20a in tRNAs. The chain is tRNA-dihydrouridine(20/20a) synthase from Escherichia coli O157:H7.